A 294-amino-acid chain; its full sequence is NADH-cytochrome b5 reductase 1 (294 aa).

A helical membrane pass occupies residues 18–38 (PFIVFATVATIISAFIGYYFL). Residues 51–154 (DEFQKFPLIE…RGPKGFFTYT (104 aa)) enclose the FAD-binding FR-type domain. Residues 134–149 (AGKN…GPKG) and 160–192 (SFGM…KIHL) contribute to the FAD site.

It belongs to the flavoprotein pyridine nucleotide cytochrome reductase family. In terms of assembly, monomer. Component of the 2-(3-amino-3-carboxypropyl)histidine synthase complex composed of DPH1, DPH2, DPH3 and a NADH-dependent reductase, predominantly CBR1. FAD is required as a cofactor.

Its subcellular location is the mitochondrion outer membrane. It carries out the reaction 2 Fe(III)-[cytochrome b5] + NADH = 2 Fe(II)-[cytochrome b5] + NAD(+) + H(+). The enzyme catalyses 2 Fe(3+)-[Dph3] + NADH = 2 Fe(2+)-[Dph3] + NAD(+) + H(+). It functions in the pathway protein modification; peptidyl-diphthamide biosynthesis. Functionally, NADH-dependent reductase for DPH3 and cytochrome b5. Required for the first step of diphthamide biosynthesis, a post-translational modification of histidine which occurs in elongation factor 2. DPH1 and DPH2 transfer a 3-amino-3-carboxypropyl (ACP) group from S-adenosyl-L-methionine (SAM) to a histidine residue, the reaction is assisted by a reduction system comprising DPH3 and a NADH-dependent reductase, predominantly CBR1. By reducing DPH3, also involved in the formation of the tRNA wobble base modification mcm5s 2U (5-methoxycarbonylmethyl-2-thiouridine), mediated by the elongator complex. The cytochrome b5/NADH cytochrome b5 reductase electron transfer system supports the catalytic activity of several sterol biosynthetic enzymes. The polypeptide is NADH-cytochrome b5 reductase 1 (CBR1) (Candida albicans (strain SC5314 / ATCC MYA-2876) (Yeast)).